A 160-amino-acid polypeptide reads, in one-letter code: Crossover junction endodeoxyribonuclease RuvC (160 aa).

Residues D7, E73, and D145 contribute to the active site. Mg(2+) contacts are provided by D7, E73, and D145.

This sequence belongs to the RuvC family. In terms of assembly, homodimer which binds Holliday junction (HJ) DNA. The HJ becomes 2-fold symmetrical on binding to RuvC with unstacked arms; it has a different conformation from HJ DNA in complex with RuvA. In the full resolvosome a probable DNA-RuvA(4)-RuvB(12)-RuvC(2) complex forms which resolves the HJ. Mg(2+) is required as a cofactor.

Its subcellular location is the cytoplasm. The catalysed reaction is Endonucleolytic cleavage at a junction such as a reciprocal single-stranded crossover between two homologous DNA duplexes (Holliday junction).. In terms of biological role, the RuvA-RuvB-RuvC complex processes Holliday junction (HJ) DNA during genetic recombination and DNA repair. Endonuclease that resolves HJ intermediates. Cleaves cruciform DNA by making single-stranded nicks across the HJ at symmetrical positions within the homologous arms, yielding a 5'-phosphate and a 3'-hydroxyl group; requires a central core of homology in the junction. The consensus cleavage sequence is 5'-(A/T)TT(C/G)-3'. Cleavage occurs on the 3'-side of the TT dinucleotide at the point of strand exchange. HJ branch migration catalyzed by RuvA-RuvB allows RuvC to scan DNA until it finds its consensus sequence, where it cleaves and resolves the cruciform DNA. In Synechococcus sp. (strain CC9311), this protein is Crossover junction endodeoxyribonuclease RuvC.